We begin with the raw amino-acid sequence, 569 residues long: Alpha-amylase (569 aa).

The signal sequence occupies residues 1-28 (MARKTVAAALALVAGAAVAVTGNAPAQA). Ca(2+)-binding residues include Asn120, Gln166, and Asp175. The Nucleophile role is filled by Asp205. His209 is a Ca(2+) binding site. The active-site Proton donor is the Glu232. The region spanning 468-569 (TTPPATSGAS…QLVLNDTFRS (102 aa)) is the CBM20 domain.

The protein belongs to the glycosyl hydrolase 13 family. In terms of assembly, monomer. It depends on Ca(2+) as a cofactor.

It catalyses the reaction Endohydrolysis of (1-&gt;4)-alpha-D-glucosidic linkages in polysaccharides containing three or more (1-&gt;4)-alpha-linked D-glucose units.. This chain is Alpha-amylase (aml), found in Streptomyces violaceus (Streptomyces venezuelae).